The sequence spans 129 residues: Flagellar basal body rod protein FlgB (129 aa).

Belongs to the flagella basal body rod proteins family. The basal body constitutes a major portion of the flagellar organelle and consists of a number of rings mounted on a central rod. In Gram-negative bacteria, at least four rings, L, P, S and M are present, whereas Gram-positive bacteria lack the L and P rings. The rod consists of about 26 subunits of FlgG in the distal portion, and FlgB, FlgC and FlgF build up the proximal portion of the rod with about 6 subunits each. Rod assembly occurs by export via the flagellum-specific pathway of its constituent proteins and by their incorporation into the rod structure in the probable order of FlgB, FlgC, FlgF and FlgG. Another protein, FliE, also assembles onto the stable rod structure.

It is found in the bacterial flagellum basal body. Its function is as follows. Structural component of flagellum, the bacterial motility apparatus. Part of the rod structure of flagellar basal body. The chain is Flagellar basal body rod protein FlgB (flgB) from Bacillus subtilis (strain 168).